The chain runs to 182 residues: Large ribosomal subunit protein uL6 (182 aa).

It belongs to the universal ribosomal protein uL6 family. As to quaternary structure, part of the 50S ribosomal subunit.

Functionally, this protein binds to the 23S rRNA, and is important in its secondary structure. It is located near the subunit interface in the base of the L7/L12 stalk, and near the tRNA binding site of the peptidyltransferase center. The protein is Large ribosomal subunit protein uL6 of Pelotomaculum thermopropionicum (strain DSM 13744 / JCM 10971 / SI).